The sequence spans 305 residues: Recombination-associated protein RdgC (305 aa).

This sequence belongs to the RdgC family.

Its subcellular location is the cytoplasm. The protein localises to the nucleoid. In terms of biological role, may be involved in recombination. In Sodalis glossinidius (strain morsitans), this protein is Recombination-associated protein RdgC.